Consider the following 884-residue polypeptide: Alanine--tRNA ligase (884 aa).

Zn(2+)-binding residues include H568, H572, C670, and H674.

The protein belongs to the class-II aminoacyl-tRNA synthetase family. Zn(2+) is required as a cofactor.

It localises to the cytoplasm. It carries out the reaction tRNA(Ala) + L-alanine + ATP = L-alanyl-tRNA(Ala) + AMP + diphosphate. In terms of biological role, catalyzes the attachment of alanine to tRNA(Ala) in a two-step reaction: alanine is first activated by ATP to form Ala-AMP and then transferred to the acceptor end of tRNA(Ala). Also edits incorrectly charged Ser-tRNA(Ala) and Gly-tRNA(Ala) via its editing domain. The protein is Alanine--tRNA ligase of Synechococcus sp. (strain JA-2-3B'a(2-13)) (Cyanobacteria bacterium Yellowstone B-Prime).